The following is a 206-amino-acid chain: Transmembrane emp24 domain-containing protein bai (206 aa).

The first 20 residues, 1–20 (MMKAILATLAIFGCIWPGQS), serve as a signal peptide directing secretion. Residues 21 to 172 (VMFHLTPNTQ…RDTNEKTNSR (152 aa)) lie on the Lumenal side of the membrane. Residues 30-140 (QKCLKEDIQA…LKPLEVDLKR (111 aa)) form the GOLD domain. The chain crosses the membrane as a helical span at residues 173–193 (VLFFSIFSMCCLLGLATWQVL). The Cytoplasmic portion of the chain corresponds to 194-206 (YLRRYFKAKKLIE).

This sequence belongs to the EMP24/GP25L family.

It is found in the membrane. In terms of biological role, eca and bai are essential, though not redundant, for dorsoventral patterning of the embryo. Specifically required during early embryogenesis for the activity of maternal tkv, while the zygotic tkv is not affected. The chain is Transmembrane emp24 domain-containing protein bai from Drosophila willistoni (Fruit fly).